Reading from the N-terminus, the 147-residue chain is Putative pre-16S rRNA nuclease (147 aa).

The protein belongs to the YqgF nuclease family.

The protein localises to the cytoplasm. Functionally, could be a nuclease involved in processing of the 5'-end of pre-16S rRNA. The protein is Putative pre-16S rRNA nuclease of Ligilactobacillus salivarius (strain UCC118) (Lactobacillus salivarius).